Consider the following 447-residue polypeptide: Na(+)-translocating NADH-quinone reductase subunit A (447 aa).

The protein belongs to the NqrA family. As to quaternary structure, composed of six subunits; NqrA, NqrB, NqrC, NqrD, NqrE and NqrF.

The catalysed reaction is a ubiquinone + n Na(+)(in) + NADH + H(+) = a ubiquinol + n Na(+)(out) + NAD(+). In terms of biological role, NQR complex catalyzes the reduction of ubiquinone-1 to ubiquinol by two successive reactions, coupled with the transport of Na(+) ions from the cytoplasm to the periplasm. NqrA to NqrE are probably involved in the second step, the conversion of ubisemiquinone to ubiquinol. The protein is Na(+)-translocating NADH-quinone reductase subunit A of Photorhabdus laumondii subsp. laumondii (strain DSM 15139 / CIP 105565 / TT01) (Photorhabdus luminescens subsp. laumondii).